The following is a 439-amino-acid chain: Methylenetetrahydrofolate--tRNA-(uracil-5-)-methyltransferase TrmFO (439 aa).

9 to 14 is an FAD binding site; it reads GAGLAG.

The protein belongs to the MnmG family. TrmFO subfamily. FAD is required as a cofactor.

Its subcellular location is the cytoplasm. It catalyses the reaction uridine(54) in tRNA + (6R)-5,10-methylene-5,6,7,8-tetrahydrofolate + NADH + H(+) = 5-methyluridine(54) in tRNA + (6S)-5,6,7,8-tetrahydrofolate + NAD(+). It carries out the reaction uridine(54) in tRNA + (6R)-5,10-methylene-5,6,7,8-tetrahydrofolate + NADPH + H(+) = 5-methyluridine(54) in tRNA + (6S)-5,6,7,8-tetrahydrofolate + NADP(+). In terms of biological role, catalyzes the folate-dependent formation of 5-methyl-uridine at position 54 (M-5-U54) in all tRNAs. This is Methylenetetrahydrofolate--tRNA-(uracil-5-)-methyltransferase TrmFO from Lactobacillus delbrueckii subsp. bulgaricus (strain ATCC BAA-365 / Lb-18).